Reading from the N-terminus, the 200-residue chain is TATA-box-binding protein 2 (200 aa).

2 consecutive repeat copies span residues 25-101 and 115-192.

The protein belongs to the TBP family. As to quaternary structure, belongs to the TFIID complex together with the TBP-associated factors (TAFs). Binds DNA as monomer.

It localises to the nucleus. Functionally, general transcription factor that functions at the core of the DNA-binding multiprotein factor TFIID. Binding of TFIID to the TATA box is the initial transcriptional step of the pre-initiation complex (PIC), playing a role in the activation of eukaryotic genes transcribed by RNA polymerase II. This Zea mays (Maize) protein is TATA-box-binding protein 2 (TBP2).